The following is a 462-amino-acid chain: Putative F-box protein At1g12855 (462 aa).

Positions 1–22 (MESREDSFISKEKKSTMKKEKQ) are enriched in basic and acidic residues. Positions 1–59 (MESREDSFISKEKKSTMKKEKQAIASQRNRRRVIKNRGNGKRLIASLSQRKRRRIPRGR) are disordered. The span at 28-40 (RNRRRVIKNRGNG) shows a compositional bias: basic residues. Residues 65–110 (VFAPSSLPNDVVEEIFLRLPVKAIIQLKSLSKQWRSTIESRSFEER) form the F-box domain.

This chain is Putative F-box protein At1g12855, found in Arabidopsis thaliana (Mouse-ear cress).